Consider the following 102-residue polypeptide: Small ribosomal subunit protein uS10 (102 aa).

Residues 34 to 58 (LSGPVPLPTKTLEIPARKSPDGEGT) form a disordered region.

Belongs to the universal ribosomal protein uS10 family. Part of the 30S ribosomal subunit.

Involved in the binding of tRNA to the ribosomes. The chain is Small ribosomal subunit protein uS10 from Natronomonas pharaonis (strain ATCC 35678 / DSM 2160 / CIP 103997 / JCM 8858 / NBRC 14720 / NCIMB 2260 / Gabara) (Halobacterium pharaonis).